The chain runs to 763 residues: Phosphoglycerol transferase I (763 aa).

4 helical membrane-spanning segments follow: residues 1–21 (MSEL…AWKA), 26–46 (WWFA…ITLY), 77–97 (ILPG…LGWI), and 108–128 (VGYS…SPAF).

This sequence belongs to the OpgB family.

The protein resides in the cell inner membrane. It catalyses the reaction a phosphatidylglycerol + a membrane-derived-oligosaccharide D-glucose = a 1,2-diacyl-sn-glycerol + a membrane-derived-oligosaccharide 6-(glycerophospho)-D-glucose.. It functions in the pathway glycan metabolism; osmoregulated periplasmic glucan (OPG) biosynthesis. Its function is as follows. Transfers a phosphoglycerol residue from phosphatidylglycerol to the membrane-bound nascent glucan backbones. The polypeptide is Phosphoglycerol transferase I (Salmonella paratyphi B (strain ATCC BAA-1250 / SPB7)).